A 258-amino-acid polypeptide reads, in one-letter code: Snake venom serine protease HS114 (258 aa).

The signal sequence occupies residues 1–18 (MVLVRVVANLLILQLSYA). A propeptide spanning residues 19-24 (QKVSEL) is cleaved from the precursor. In terms of domain architecture, Peptidase S1 spans 25 to 249 (VVGGDECNIN…YNTWIESVIA (225 aa)). 6 cysteine pairs are disulfide-bonded: Cys-31/Cys-163, Cys-50/Cys-66, Cys-98/Cys-256, Cys-142/Cys-210, Cys-174/Cys-189, and Cys-200/Cys-225. An N-linked (GlcNAc...) asparagine glycan is attached at Asn-44. Catalysis depends on charge relay system residues His-65 and Asp-110. The active-site Charge relay system is the Ser-204.

It belongs to the peptidase S1 family. Snake venom subfamily. Monomer. Post-translationally, N-glycosylated. Contains approximately 10% carbohydrates. Expressed by the venom gland.

It is found in the secreted. Inhibited by benzamidine, PMSF, leupeptin, SDS and DTT, but not by EDTA, and commercial antivenom. Snake venom serine protease that shows non-specific action on fibrinogen. It preferentially degrades fibrinogen Aalpha (FGA), releasing fibrinopeptide A, and shows a lower activity on fibrinogen Bbeta (FGB), releasing fibrinopeptide B and other uncommon fibrinopeptides. Also shows low fibrinolytic activity compared to plasmin. Has high enzymatic activity on the substrates for activated protein C and factor XIa, and for thrombin. Shows a wide activity spectrum at different peptide sequences, with a preferential cleavage at Lys-|-Xaa over Arg-|-Xaa bonds. This Bothrops jararaca (Jararaca) protein is Snake venom serine protease HS114.